A 447-amino-acid polypeptide reads, in one-letter code: Multidrug efflux pump SdrM (447 aa).

A run of 14 helical transmembrane segments spans residues 6 to 26 (IITVIALILIMFMSAIESSII), 42 to 62 (LISLIFTAYFIALVIANPIVG), 70 to 90 (IIYVAIAGLLLFSIGSFMCGL), 94 to 114 (FTMLIISRVIQGFGSGVLMSL), 134 to 154 (IVGSVWGISSIIGPLLGGGIL), 161 to 181 (WLFYINIPIAIIAIILVIWTF), 194 to 214 (FDTKGLTLFYVFIGLIMFALL), 217 to 237 (QLLLLNFLSFILAIVVAMCLF), 260 to 280 (VFITDLLTAICLMGFNLYIPV), 286 to 306 (LGLSPLQSGLVIFPLSVAWIT), 323 to 342 (IYLLSFTLLLVSSIIISFGI), 346 to 363 (VLIAFVLILAGLSFGYIY), 392 to 412 (LGASIGSTIMGYLYAIQSGIF), and 418 to 438 (NVLSAVAVISIGLIVLWVVFF).

Belongs to the major facilitator superfamily.

It localises to the cell membrane. Its function is as follows. Energy-dependent drug efflux pump that increases resistance to antimicrobial agents such as norfloxacin, acriflavine and ethidium bromide. This chain is Multidrug efflux pump SdrM, found in Staphylococcus aureus (strain N315).